We begin with the raw amino-acid sequence, 429 residues long: Forkhead box protein A1-A (429 aa).

The fork-head DNA-binding region spans 159 to 253 (KPPYSYISLI…ENGCYLRRQK (95 aa)). A compositionally biased stretch (basic and acidic residues) spans 258–274 (EKTQGGKGNQDGRKDHS). The segment at 258–341 (EKTQGGKGNQ…HSTHSLAHES (84 aa)) is disordered. Positions 287-304 (SSQMDSSSSMSNPSSSPQ) are enriched in low complexity. Residues 325–336 (PLSSHQNHSTHS) are compositionally biased toward polar residues.

In terms of tissue distribution, at neurula stage, expressed in the notochord but not in the neural floor plate. During tailbud stages, expressed in the neural floor plate. At stage 35, expressed in the rhombencephalon, mesencephalon, pharyngeal pouches, foregut and pronephros. At stage 44, expressed in a region of the gut on the right hand side of the embryo. Expressed in the adult lung and liver.

Its subcellular location is the nucleus. Probable transcription factor. The chain is Forkhead box protein A1-A (foxa1-a) from Xenopus laevis (African clawed frog).